The chain runs to 204 residues: FMN-dependent NADH:quinone oxidoreductase (204 aa).

FMN contacts are provided by residues S10, 15–17, and 139–142; these read SLS and TSGG.

It belongs to the azoreductase type 1 family. In terms of assembly, homodimer. Requires FMN as cofactor.

It catalyses the reaction 2 a quinone + NADH + H(+) = 2 a 1,4-benzosemiquinone + NAD(+). The enzyme catalyses N,N-dimethyl-1,4-phenylenediamine + anthranilate + 2 NAD(+) = 2-(4-dimethylaminophenyl)diazenylbenzoate + 2 NADH + 2 H(+). In terms of biological role, quinone reductase that provides resistance to thiol-specific stress caused by electrophilic quinones. Its function is as follows. Also exhibits azoreductase activity. Catalyzes the reductive cleavage of the azo bond in aromatic azo compounds to the corresponding amines. The sequence is that of FMN-dependent NADH:quinone oxidoreductase from Rhizobium leguminosarum bv. trifolii (strain WSM2304).